The sequence spans 337 residues: Ribosomal RNA small subunit methyltransferase C (337 aa).

The protein belongs to the methyltransferase superfamily. RsmC family. As to quaternary structure, monomer.

Its subcellular location is the cytoplasm. The enzyme catalyses guanosine(1207) in 16S rRNA + S-adenosyl-L-methionine = N(2)-methylguanosine(1207) in 16S rRNA + S-adenosyl-L-homocysteine + H(+). Its function is as follows. Specifically methylates the guanine in position 1207 of 16S rRNA in the 30S particle. This is Ribosomal RNA small subunit methyltransferase C from Acinetobacter baumannii (strain ACICU).